Here is an 88-residue protein sequence, read N- to C-terminus: Small ribosomal subunit protein bS20 (88 aa).

This sequence belongs to the bacterial ribosomal protein bS20 family.

In terms of biological role, binds directly to 16S ribosomal RNA. The chain is Small ribosomal subunit protein bS20 from Clostridium novyi (strain NT).